The following is a 1399-amino-acid chain: DNA-directed RNA polymerase subunit beta' (1399 aa).

Residues Cys-70, Cys-72, Cys-85, and Cys-88 each coordinate Zn(2+). Mg(2+) is bound by residues Asp-460, Asp-462, and Asp-464. Zn(2+)-binding residues include Cys-814, Cys-888, Cys-895, and Cys-898.

Belongs to the RNA polymerase beta' chain family. The RNAP catalytic core consists of 2 alpha, 1 beta, 1 beta' and 1 omega subunit. When a sigma factor is associated with the core the holoenzyme is formed, which can initiate transcription. It depends on Mg(2+) as a cofactor. Zn(2+) serves as cofactor.

The catalysed reaction is RNA(n) + a ribonucleoside 5'-triphosphate = RNA(n+1) + diphosphate. In terms of biological role, DNA-dependent RNA polymerase catalyzes the transcription of DNA into RNA using the four ribonucleoside triphosphates as substrates. The chain is DNA-directed RNA polymerase subunit beta' from Pseudomonas savastanoi pv. phaseolicola (strain 1448A / Race 6) (Pseudomonas syringae pv. phaseolicola (strain 1448A / Race 6)).